The following is a 248-amino-acid chain: 2,3-bisphosphoglycerate-dependent phosphoglycerate mutase (248 aa).

Substrate is bound by residues 7–14, 20–21, Arg-59, 86–89, Lys-97, 113–114, and 182–183; these read RHGESIWN, TG, ERHY, RR, and GN. His-8 (tele-phosphohistidine intermediate) is an active-site residue. Glu-86 serves as the catalytic Proton donor/acceptor.

The protein belongs to the phosphoglycerate mutase family. BPG-dependent PGAM subfamily.

The catalysed reaction is (2R)-2-phosphoglycerate = (2R)-3-phosphoglycerate. The protein operates within carbohydrate degradation; glycolysis; pyruvate from D-glyceraldehyde 3-phosphate: step 3/5. Functionally, catalyzes the interconversion of 2-phosphoglycerate and 3-phosphoglycerate. In Methylacidiphilum infernorum (isolate V4) (Methylokorus infernorum (strain V4)), this protein is 2,3-bisphosphoglycerate-dependent phosphoglycerate mutase.